Here is a 154-residue protein sequence, read N- to C-terminus: Probable archaeosortase D (154 aa).

A run of 4 helical transmembrane segments spans residues 6–26, 57–77, 91–111, and 125–145; these read AIYILRFLIYFFIFYYILKML, IIEISSPCTCSLEMALFLGYI, YSVFGLSIITISNILRIILII, and VISFIIFPIALFLNWFWIYLL. Residue Cys64 is the Acyl-thioester intermediate of the active site. The Proton donor role is filled by Arg106.

The protein belongs to the exosortase/archaeosortase family. Archaeosortase D subfamily.

The protein localises to the cell membrane. Its function is as follows. Transpeptidase that recognizes and modifies its substrate by proteolytic cleavage of a sorting signal. Following cleavage, a covalent intermediate is formed via a thioester bond between the archaeosortase and its substrate, which is then transferred and covalently attached to the cell membrane. This Methanocaldococcus jannaschii (strain ATCC 43067 / DSM 2661 / JAL-1 / JCM 10045 / NBRC 100440) (Methanococcus jannaschii) protein is Probable archaeosortase D.